A 106-amino-acid polypeptide reads, in one-letter code: ATP-dependent Clp protease adapter protein ClpS (106 aa).

The protein belongs to the ClpS family. In terms of assembly, binds to the N-terminal domain of the chaperone ClpA.

Its function is as follows. Involved in the modulation of the specificity of the ClpAP-mediated ATP-dependent protein degradation. The chain is ATP-dependent Clp protease adapter protein ClpS from Erwinia tasmaniensis (strain DSM 17950 / CFBP 7177 / CIP 109463 / NCPPB 4357 / Et1/99).